The primary structure comprises 113 residues: Prefoldin subunit beta (113 aa).

Belongs to the prefoldin subunit beta family. Heterohexamer of two alpha and four beta subunits.

Its subcellular location is the cytoplasm. Molecular chaperone capable of stabilizing a range of proteins. Seems to fulfill an ATP-independent, HSP70-like function in archaeal de novo protein folding. This is Prefoldin subunit beta from Methanococcus maripaludis (strain C7 / ATCC BAA-1331).